The sequence spans 142 residues: Large ribosomal subunit protein uL11 (142 aa).

This sequence belongs to the universal ribosomal protein uL11 family. As to quaternary structure, part of the ribosomal stalk of the 50S ribosomal subunit. Interacts with L10 and the large rRNA to form the base of the stalk. L10 forms an elongated spine to which L12 dimers bind in a sequential fashion forming a multimeric L10(L12)X complex. One or more lysine residues are methylated.

Forms part of the ribosomal stalk which helps the ribosome interact with GTP-bound translation factors. This is Large ribosomal subunit protein uL11 from Shewanella pealeana (strain ATCC 700345 / ANG-SQ1).